Reading from the N-terminus, the 505-residue chain is Calcium/calmodulin-dependent protein kinase kinase 1 (505 aa).

Residues 27–66 are disordered; sequence HLEEAEEGPEPASNGVDPPPRARAASVIPGSASRPTPVRP. A phosphoserine mark is found at serine 67 and serine 74. Residue arginine 78 is modified to Asymmetric dimethylarginine. Serine 100 is modified (phosphoserine). Position 108 is a phosphothreonine (threonine 108). One can recognise a Protein kinase domain in the interval 128-409; that stretch reads YKLQSEIGKG…VSDIKLHPWV (282 aa). Residues 134-142 and lysine 157 contribute to the ATP site; that span reads IGKGAYGVV. The RP domain stretch occupies residues 167–189; the sequence is QYGFPRRPPPRGSQAPQGGPAKQ. Residue aspartate 275 is the Proton acceptor of the active site. Positions 435-440 are autoinhibitory domain; sequence KNSVKL. Residues 438–463 form a calmodulin-binding region; it reads VKLIPSWTTVILVKSMLRKRSFGNPF. Phosphoserine is present on residues serine 458, serine 475, and serine 492. Residues 460-505 form a disordered region; that stretch reads GNPFEPQARREERSMSAPGNLLLKEGCGEGGKSPELPGVQEDEAAS.

The protein belongs to the protein kinase superfamily. Ser/Thr protein kinase family. Interacts with CAMK4 and calmodulin. Appears to be autophosphorylated. Phosphorylated at multiple sites by PRCAKA/PKA. Phosphorylation of Ser-458 is blocked upon binding to Ca(2+)/calmodulin. May be phosphorylated by CAMK1 and CAMK4. As to expression, mostly expressed in the brain with higher levels in cortex and hippocampus. Lower expression levels were detected in striatum, nucleus accumbens and cerebellum (at protein level). Abundant in forebrain, weaker in cerebellum and also detected in thymus and spleen.

The protein resides in the cytoplasm. The protein localises to the nucleus. The catalysed reaction is L-seryl-[protein] + ATP = O-phospho-L-seryl-[protein] + ADP + H(+). It carries out the reaction L-threonyl-[protein] + ATP = O-phospho-L-threonyl-[protein] + ADP + H(+). Its activity is regulated as follows. Activated by Ca(2+)/calmodulin. Binding of calmodulin may relieve intrasteric autoinhibition. Partially inhibited upon phosphorylation by PRCAKA/PKA. May be regulated through phosphorylation by CAMK1 and CAMK4. Functionally, calcium/calmodulin-dependent protein kinase that belongs to a proposed calcium-triggered signaling cascade involved in a number of cellular processes. Phosphorylates CAMK1, CAMK1D, CAMK1G and CAMK4. Involved in regulating cell apoptosis. Promotes cell survival by phosphorylating AKT1/PKB that inhibits pro-apoptotic BAD/Bcl2-antagonist of cell death. This is Calcium/calmodulin-dependent protein kinase kinase 1 (Camkk1) from Rattus norvegicus (Rat).